The following is a 346-amino-acid chain: Holliday junction branch migration complex subunit RuvB (346 aa).

The segment at 4–184 (TDRLIAPTAK…FGIVQRLEFY (181 aa)) is large ATPase domain (RuvB-L). ATP-binding positions include R24, G65, K68, T69, T70, 131–133 (EDF), R174, Y184, and R221. A Mg(2+)-binding site is contributed by T69. Residues 185-255 (NVKDLTHIVA…LADKALNMLN (71 aa)) are small ATPAse domain (RuvB-S). Positions 258–346 (ERGFDHMDRR…QESQGGEGIA (89 aa)) are head domain (RuvB-H). Positions 294, 313, and 318 each coordinate DNA.

It belongs to the RuvB family. As to quaternary structure, homohexamer. Forms an RuvA(8)-RuvB(12)-Holliday junction (HJ) complex. HJ DNA is sandwiched between 2 RuvA tetramers; dsDNA enters through RuvA and exits via RuvB. An RuvB hexamer assembles on each DNA strand where it exits the tetramer. Each RuvB hexamer is contacted by two RuvA subunits (via domain III) on 2 adjacent RuvB subunits; this complex drives branch migration. In the full resolvosome a probable DNA-RuvA(4)-RuvB(12)-RuvC(2) complex forms which resolves the HJ.

The protein localises to the cytoplasm. It catalyses the reaction ATP + H2O = ADP + phosphate + H(+). Its function is as follows. The RuvA-RuvB-RuvC complex processes Holliday junction (HJ) DNA during genetic recombination and DNA repair, while the RuvA-RuvB complex plays an important role in the rescue of blocked DNA replication forks via replication fork reversal (RFR). RuvA specifically binds to HJ cruciform DNA, conferring on it an open structure. The RuvB hexamer acts as an ATP-dependent pump, pulling dsDNA into and through the RuvAB complex. RuvB forms 2 homohexamers on either side of HJ DNA bound by 1 or 2 RuvA tetramers; 4 subunits per hexamer contact DNA at a time. Coordinated motions by a converter formed by DNA-disengaged RuvB subunits stimulates ATP hydrolysis and nucleotide exchange. Immobilization of the converter enables RuvB to convert the ATP-contained energy into a lever motion, pulling 2 nucleotides of DNA out of the RuvA tetramer per ATP hydrolyzed, thus driving DNA branch migration. The RuvB motors rotate together with the DNA substrate, which together with the progressing nucleotide cycle form the mechanistic basis for DNA recombination by continuous HJ branch migration. Branch migration allows RuvC to scan DNA until it finds its consensus sequence, where it cleaves and resolves cruciform DNA. This Cellvibrio japonicus (strain Ueda107) (Pseudomonas fluorescens subsp. cellulosa) protein is Holliday junction branch migration complex subunit RuvB.